The primary structure comprises 348 residues: Phosphate acyltransferase (348 aa).

It belongs to the PlsX family. As to quaternary structure, homodimer. Probably interacts with PlsY.

The protein resides in the cytoplasm. The enzyme catalyses a fatty acyl-[ACP] + phosphate = an acyl phosphate + holo-[ACP]. It participates in lipid metabolism; phospholipid metabolism. In terms of biological role, catalyzes the reversible formation of acyl-phosphate (acyl-PO(4)) from acyl-[acyl-carrier-protein] (acyl-ACP). This enzyme utilizes acyl-ACP as fatty acyl donor, but not acyl-CoA. This chain is Phosphate acyltransferase, found in Rhizobium leguminosarum bv. trifolii (strain WSM2304).